Here is a 552-residue protein sequence, read N- to C-terminus: Protein TRM32 (552 aa).

A disordered region spans residues 295-379 (TDLPRDSSTS…NKTAEKTETL (85 aa)). Positions 331-351 (VRAEKEEKYEVQEERSQENHL) are enriched in basic and acidic residues. Residues 352-371 (DSSNQRILQQEPDSVPSTNK) show a composition bias toward polar residues.

The polypeptide is Protein TRM32 (TRM32) (Arabidopsis thaliana (Mouse-ear cress)).